Reading from the N-terminus, the 348-residue chain is 3-isopropylmalate dehydrogenase (348 aa).

76-87 (GPKWTDPNNRPE) contributes to the NAD(+) binding site. Residues R94, R104, R132, and D217 each coordinate substrate. Residues D217, D241, and D245 each coordinate Mg(2+). 275-287 (GSAPDIAGKNVAN) serves as a coordination point for NAD(+).

It belongs to the isocitrate and isopropylmalate dehydrogenases family. LeuB type 1 subfamily. In terms of assembly, homodimer. Mg(2+) serves as cofactor. The cofactor is Mn(2+).

It is found in the cytoplasm. The catalysed reaction is (2R,3S)-3-isopropylmalate + NAD(+) = 4-methyl-2-oxopentanoate + CO2 + NADH. It functions in the pathway amino-acid biosynthesis; L-leucine biosynthesis; L-leucine from 3-methyl-2-oxobutanoate: step 3/4. Catalyzes the oxidation of 3-carboxy-2-hydroxy-4-methylpentanoate (3-isopropylmalate) to 3-carboxy-4-methyl-2-oxopentanoate. The product decarboxylates to 4-methyl-2 oxopentanoate. The chain is 3-isopropylmalate dehydrogenase from Staphylococcus aureus (strain MRSA252).